The chain runs to 365 residues: tRNA N6-adenosine threonylcarbamoyltransferase (365 aa).

Positions 119 and 123 each coordinate Fe cation. Substrate-binding positions include 141-145 (LVSGG), Asp174, Gly187, and Asn288. Asp316 serves as a coordination point for Fe cation.

Belongs to the KAE1 / TsaD family. Fe(2+) serves as cofactor.

The protein resides in the cytoplasm. It catalyses the reaction L-threonylcarbamoyladenylate + adenosine(37) in tRNA = N(6)-L-threonylcarbamoyladenosine(37) in tRNA + AMP + H(+). In terms of biological role, required for the formation of a threonylcarbamoyl group on adenosine at position 37 (t(6)A37) in tRNAs that read codons beginning with adenine. Is involved in the transfer of the threonylcarbamoyl moiety of threonylcarbamoyl-AMP (TC-AMP) to the N6 group of A37, together with TsaE and TsaB. TsaD likely plays a direct catalytic role in this reaction. This Rhizobium etli (strain CIAT 652) protein is tRNA N6-adenosine threonylcarbamoyltransferase.